Consider the following 344-residue polypeptide: Anthranilate phosphoribosyltransferase (344 aa).

Residues Gly84, 87 to 88 (GD), Ser92, 94 to 97 (NIST), 112 to 120 (KHGNRSASG), and Ser124 each bind 5-phospho-alpha-D-ribose 1-diphosphate. Gly84 lines the anthranilate pocket. Position 96 (Ser96) interacts with Mg(2+). An anthranilate-binding site is contributed by Asn115. Anthranilate is bound at residue Arg170. Residues Asp229 and Glu230 each contribute to the Mg(2+) site.

Belongs to the anthranilate phosphoribosyltransferase family. In terms of assembly, homodimer. The cofactor is Mg(2+).

It catalyses the reaction N-(5-phospho-beta-D-ribosyl)anthranilate + diphosphate = 5-phospho-alpha-D-ribose 1-diphosphate + anthranilate. The protein operates within amino-acid biosynthesis; L-tryptophan biosynthesis; L-tryptophan from chorismate: step 2/5. Functionally, catalyzes the transfer of the phosphoribosyl group of 5-phosphorylribose-1-pyrophosphate (PRPP) to anthranilate to yield N-(5'-phosphoribosyl)-anthranilate (PRA). In Synechococcus sp. (strain RCC307), this protein is Anthranilate phosphoribosyltransferase.